Reading from the N-terminus, the 172-residue chain is WW domain binding protein VOPP1 (172 aa).

Residues 1–22 (MARPLGRVAALLLGLLMECTEA) form the signal peptide. Topologically, residues 23–60 (KKHCWYFEGLYPTYYICRSYEDCCGSRCCVRALSIQRL) are extracellular. A helical membrane pass occupies residues 61 to 81 (WYFWFLLMMGVLFCCGAGFFI). Over 82 to 172 (RRRMYPPPLI…PPYEQVVKDK (91 aa)) the chain is Cytoplasmic. The interval 139-172 (QVQPNSPHGGTTYPPPPSYCNTPPPPYEQVVKDK) is disordered. The span at 151-165 (YPPPPSYCNTPPPPY) shows a compositional bias: pro residues.

The protein belongs to the VOPP1/ECOP family. In terms of assembly, interacts with WWOX (via WW domain).

The protein resides in the cytoplasmic vesicle membrane. It is found in the late endosome membrane. The protein localises to the lysosome membrane. Increases the transcriptional activity of NFKB1 by facilitating its nuclear translocation, DNA-binding and associated apoptotic response, when overexpressed. May sequester WWOX in lysosomal vesicles and thereby regulate WWOX role as tumor suppressor. In Rattus norvegicus (Rat), this protein is WW domain binding protein VOPP1.